The sequence spans 50 residues: MVDLWPVSTRPRVLFRAAPSLLNSASAASMLWAELIAMAPSIPSALPPFS.

At Ser-8 the chain carries Phosphoserine; by PKC.

Brain.

Neurite outgrowth factor. The chain is Sproutin from Rattus norvegicus (Rat).